A 328-amino-acid polypeptide reads, in one-letter code: Probable tRNA-dihydrouridine synthase (328 aa).

18–20 (PME) is an FMN binding site. The active-site Proton donor is Cys-105. FMN contacts are provided by residues Lys-143, 208-210 (NGD), and 232-233 (GR).

The protein belongs to the Dus family. It depends on FMN as a cofactor.

It catalyses the reaction a 5,6-dihydrouridine in tRNA + NAD(+) = a uridine in tRNA + NADH + H(+). The catalysed reaction is a 5,6-dihydrouridine in tRNA + NADP(+) = a uridine in tRNA + NADPH + H(+). Catalyzes the synthesis of 5,6-dihydrouridine (D), a modified base found in the D-loop of most tRNAs, via the reduction of the C5-C6 double bond in target uridines. The sequence is that of Probable tRNA-dihydrouridine synthase (dus) from Staphylococcus aureus (strain Mu50 / ATCC 700699).